Reading from the N-terminus, the 207-residue chain is Peptidyl-tRNA hydrolase (207 aa).

TRNA is bound at residue Tyr14. His19 functions as the Proton acceptor in the catalytic mechanism. TRNA contacts are provided by Tyr64, Asn66, and Asn112.

It belongs to the PTH family. As to quaternary structure, monomer.

The protein resides in the cytoplasm. The enzyme catalyses an N-acyl-L-alpha-aminoacyl-tRNA + H2O = an N-acyl-L-amino acid + a tRNA + H(+). Hydrolyzes ribosome-free peptidyl-tRNAs (with 1 or more amino acids incorporated), which drop off the ribosome during protein synthesis, or as a result of ribosome stalling. Functionally, catalyzes the release of premature peptidyl moieties from peptidyl-tRNA molecules trapped in stalled 50S ribosomal subunits, and thus maintains levels of free tRNAs and 50S ribosomes. In Rhodopseudomonas palustris (strain HaA2), this protein is Peptidyl-tRNA hydrolase.